The following is a 451-amino-acid chain: BAHD acyltransferase At3g29680 (451 aa).

Residues histidine 161 and aspartate 393 each act as proton acceptor in the active site.

This sequence belongs to the plant acyltransferase family.

The protein is BAHD acyltransferase At3g29680 of Arabidopsis thaliana (Mouse-ear cress).